Reading from the N-terminus, the 479-residue chain is uncharacterized protein (479 aa).

The disordered stretch occupies residues 180 to 203 (LGGEHSDSTNTELANPSSTTTRIT). Polar residues predominate over residues 187–202 (STNTELANPSSTTTRI). One can recognise a PE-PPE domain in the interval 240 to 462 (PGTTPEVVSY…LKPLVDAGYS (223 aa)).

This sequence belongs to the mycobacterial PPE family.

This is an uncharacterized protein from Mycobacterium tuberculosis (strain CDC 1551 / Oshkosh).